Consider the following 374-residue polypeptide: Methionine import ATP-binding protein MetN 2 (374 aa).

The interval 1–22 is disordered; the sequence is MSVATLQRKLPEAAPRRAGQTE. In terms of domain architecture, ABC transporter spans 32-271; sequence VRFIGLGKTY…PQHEVSKTLL (240 aa). Residue 68–75 coordinates ATP; it reads GRSGAGKS.

It belongs to the ABC transporter superfamily. Methionine importer (TC 3.A.1.24) family. In terms of assembly, the complex is composed of two ATP-binding proteins (MetN), two transmembrane proteins (MetI) and a solute-binding protein (MetQ).

It is found in the cell inner membrane. The enzyme catalyses L-methionine(out) + ATP + H2O = L-methionine(in) + ADP + phosphate + H(+). It catalyses the reaction D-methionine(out) + ATP + H2O = D-methionine(in) + ADP + phosphate + H(+). Its function is as follows. Part of the ABC transporter complex MetNIQ involved in methionine import. Responsible for energy coupling to the transport system. The protein is Methionine import ATP-binding protein MetN 2 of Pseudomonas fluorescens (strain ATCC BAA-477 / NRRL B-23932 / Pf-5).